A 288-amino-acid chain; its full sequence is Aminoglycoside N(3)-acetyltransferase VII (288 aa).

The protein belongs to the antibiotic N-acetyltransferase family.

The catalysed reaction is a 2-deoxystreptamine antibiotic + acetyl-CoA = an N(3)-acetyl-2-deoxystreptamine antibiotic + CoA + H(+). Its function is as follows. Resistance to paromomycin. The sequence is that of Aminoglycoside N(3)-acetyltransferase VII (aacC7) from Streptomyces paromomycinus (Streptomyces rimosus subsp. paromomycinus).